Here is a 401-residue protein sequence, read N- to C-terminus: NADH-dependent flavin oxidoreductase iliE (401 aa).

FMN contacts are provided by residues 25–28 (ASMS) and glutamine 107. 188–191 (HAAH) contacts substrate. 346-347 (AR) serves as a coordination point for FMN.

The protein belongs to the NADH:flavin oxidoreductase/NADH oxidase family.

In terms of biological role, NADH-dependent flavin oxidoreductase; part of the gene cluster that mediates the biosynthesis of ilicicolin H, a 4-hydroxy-2-pyridonealkaloid that has potent and broad antifungal activities by inhibiting the mitochondrial respiration chain. The biosynthesis of ilicicolin H starts with formation of the tetramic acid by the hybrid PKS-NRPS synthetase iliA with the partnering trans-enoyl reductase iliB since iliA lacks a designated enoylreductase (ER) domain. The cytochrome P450 monooxygenase iliC then catalyzes the ring expansion of the tetramate to the acyclic 2-pyridone. The pericyclase iliD further converts the acyclic 2-pyridone into 8-epi-ilicicolin H. 8-epi-ilicicolin H might then spontaneously convert to ilicicolin H since ilicicolin H is produced in the absence of the epimerase iliE, in contrast to what was observed for the Talaromyces variabilis ilicolin H biosynthetic pathway. The chain is NADH-dependent flavin oxidoreductase iliE from Hypocrea jecorina (strain QM6a) (Trichoderma reesei).